The sequence spans 137 residues: Acidic phospholipase A2 Vur-PL3 (137 aa).

An N-terminal signal peptide occupies residues 1-16 (MRTLWIVAVCLIGVEG). 7 disulfides stabilise this stretch: Cys42–Cys131, Cys44–Cys60, Cys59–Cys111, Cys65–Cys137, Cys66–Cys104, Cys73–Cys97, and Cys91–Cys102. 3 residues coordinate Ca(2+): Tyr43, Gly45, and Gly47. His63 is a catalytic residue. Asp64 is a Ca(2+) binding site. The active site involves Asp105.

Ca(2+) is required as a cofactor. In terms of tissue distribution, expressed by the venom gland.

Its subcellular location is the secreted. It catalyses the reaction a 1,2-diacyl-sn-glycero-3-phosphocholine + H2O = a 1-acyl-sn-glycero-3-phosphocholine + a fatty acid + H(+). The chain is Acidic phospholipase A2 Vur-PL3 from Vipera renardi (Steppe viper).